A 183-amino-acid chain; its full sequence is Holliday junction branch migration complex subunit RuvA (183 aa).

A domain I region spans residues 1 to 64 (MIVAIEGIVS…EDSHKLYGFL (64 aa)). Residues 65–138 (DTNEQRMFEL…SDAKINIENS (74 aa)) form a domain II region. Residue Ser138 is a region of interest, flexible linker. Positions 138 to 183 (SNQDHAQALAALLSLGFKQENILKVLRTCESQNTSELIKEALKKLA) are domain III.

The protein belongs to the RuvA family. Homotetramer. Forms an RuvA(8)-RuvB(12)-Holliday junction (HJ) complex. HJ DNA is sandwiched between 2 RuvA tetramers; dsDNA enters through RuvA and exits via RuvB. An RuvB hexamer assembles on each DNA strand where it exits the tetramer. Each RuvB hexamer is contacted by two RuvA subunits (via domain III) on 2 adjacent RuvB subunits; this complex drives branch migration. In the full resolvosome a probable DNA-RuvA(4)-RuvB(12)-RuvC(2) complex forms which resolves the HJ.

The protein localises to the cytoplasm. In terms of biological role, the RuvA-RuvB-RuvC complex processes Holliday junction (HJ) DNA during genetic recombination and DNA repair, while the RuvA-RuvB complex plays an important role in the rescue of blocked DNA replication forks via replication fork reversal (RFR). RuvA specifically binds to HJ cruciform DNA, conferring on it an open structure. The RuvB hexamer acts as an ATP-dependent pump, pulling dsDNA into and through the RuvAB complex. HJ branch migration allows RuvC to scan DNA until it finds its consensus sequence, where it cleaves and resolves the cruciform DNA. The chain is Holliday junction branch migration complex subunit RuvA from Campylobacter lari (strain RM2100 / D67 / ATCC BAA-1060).